Consider the following 425-residue polypeptide: Probable sucrose-phosphatase 3a (425 aa).

This sequence belongs to the sucrose phosphatase family. Homodimer. The cofactor is Mg(2+).

It carries out the reaction sucrose 6(F)-phosphate + H2O = sucrose + phosphate. It participates in glycan biosynthesis; sucrose biosynthesis; sucrose from D-fructose 6-phosphate and UDP-alpha-D-glucose: step 2/2. Functionally, catalyzes the final step of sucrose synthesis. The chain is Probable sucrose-phosphatase 3a (SPP3A) from Arabidopsis thaliana (Mouse-ear cress).